Consider the following 134-residue polypeptide: uncharacterized protein (134 aa).

A run of 3 helical transmembrane segments spans residues F8–Y28, G54–L74, and L113–D133.

Belongs to the cornichon family.

Its subcellular location is the endoplasmic reticulum membrane. This is an uncharacterized protein from Schizosaccharomyces pombe (strain 972 / ATCC 24843) (Fission yeast).